Reading from the N-terminus, the 999-residue chain is MASNATFEVEIYGNTTKFENSLKGVNTAMSGLRGEAKNLREALKLDPANTGKMAQLQKNLQTQLGLSRDKATKLKEELSTVDKGTSAGQKKWLQLTRDLGTVETQANRLEGEIKQVEGAISSGSWNIDAKMDTKGVNSGIDGMKSRFSGLREIAVGVFRQIGSSAVSAVGNGLKGWVSDAMDTQKAMISLQNTLKFKGNGQDFDYVSKSMQTLAKDTNANTEDTLKLSTTFIGLGDSAKTAVGKTEALVKANQAFGGTGEQLKGVVQAYGQMSASGKVSAENINQLTDNNTALGSALKSTVMEMNPALKQYGSFASASEKGAISVEMLDKAMQKLGGAGGGAVTTIGDAWDSFNETLSLALLPTLDALTPIISSIIDKMAGWGESAGKALDSIVKYVKELWGALEKNGALSSLSKIWDGLKSTFGSVLSIIGQLIESFAGIDLKTGESAGSVENVSKTIANLAKGLADVIKKIADFAKKFSESKGAIDTLKTSLVALTAGFVAFKIGSGIITAISAFKKLQTAIQAGTGVMGAFNAVMAINPFVALGIAIAAIVAGLVYFFTQTETGKKAWASFVDFLKSAWDGIVSFFSGIGQWFADIWNGAVDGAKGIWQGLVDWFSGIVQGVQNIWNGITTFFTTLWTTVVTGIQTAWAGVTGFFTGLWDGIVNVVTTVFTTISSLVTGAYNWFVTTFQPLISFYKSIFGLVGSVINLAFQLILAIIRGAYQLVIGAWSGISGFFGVIFNAVSSVVSTVFSAIGSFAGSAWNVLVGVWNAVAGFFGGIFNAVKGVVSSVFSAIGSFASSAWGVVSSIWSAVSGFFSGIFNAVSSVVSGVFSALGGFASNAWGAITGIFSGVADFFSGVFDGAKNIVSGVFEAFGNFASNAWNAITGVFNGIGSFFSDIFGGVKNTIDSVLGGVTDTINNIKGSIDWVASKVGGLFKGSMVVGLTDVNLSSSGYGLSTNSVSSDNRTYNTFNVQGGAGQDVSNLARAIRREFELGRA.

The protein belongs to the skunalikevirus tape measure protein family.

Its subcellular location is the virion. Its function is as follows. Probable tape measure protein. Serves as a base for tail tube protein polymerization and acts as a template for tail length determination. This is Probable tape measure protein from Lactococcus phage p2 (Lactococcus lactis bacteriophage p2).